The sequence spans 38 residues: Large ribosomal subunit protein bL36 (38 aa).

It belongs to the bacterial ribosomal protein bL36 family.

In Streptococcus pneumoniae serotype 4 (strain ATCC BAA-334 / TIGR4), this protein is Large ribosomal subunit protein bL36 (rpmJ).